The chain runs to 247 residues: Segregation and condensation protein A (247 aa).

It belongs to the ScpA family. Component of a cohesin-like complex composed of ScpA, ScpB and the Smc homodimer, in which ScpA and ScpB bind to the head domain of Smc. The presence of the three proteins is required for the association of the complex with DNA.

The protein localises to the cytoplasm. Its function is as follows. Participates in chromosomal partition during cell division. May act via the formation of a condensin-like complex containing Smc and ScpB that pull DNA away from mid-cell into both cell halves. This chain is Segregation and condensation protein A, found in Lactobacillus johnsonii (strain CNCM I-12250 / La1 / NCC 533).